The chain runs to 332 residues: Beta-1,3-N-acetylglucosaminyltransferase radical fringe (332 aa).

Topologically, residues 1 to 6 are cytoplasmic; that stretch reads MSRARR. The helical; Signal-anchor for type II membrane protein transmembrane segment at 7–29 threads the bilayer; it reads VLCRACLALAAVLAVLLLLPLPL. Over 30-332 the chain is Lumenal; sequence PLPLPRAPAP…MKNRVEGAFQ (303 aa). Arginine 75 provides a ligand contact to substrate. N-linked (GlcNAc...) asparagine glycosylation is present at asparagine 114. 2 disulfide bridges follow: cysteine 115–cysteine 126 and cysteine 144–cysteine 208. Position 148 (aspartate 148) interacts with substrate. Mn(2+) is bound at residue aspartate 149. Residue aspartate 238 is part of the active site. Histidine 262 serves as a coordination point for Mn(2+). A disulfide bond links cysteine 312 and cysteine 321.

The protein belongs to the glycosyltransferase 31 family. Mn(2+) is required as a cofactor. In terms of tissue distribution, detected in all the examined tissues (12.5 dpc). High expression found in adult brain.

The protein resides in the golgi apparatus membrane. It carries out the reaction 3-O-(alpha-L-fucosyl)-L-threonyl-[EGF-like domain protein] + UDP-N-acetyl-alpha-D-glucosamine = 3-O-(N-acetyl-beta-D-glucosaminyl-(1-&gt;3)-alpha-L-fucosyl)-L-threonyl-[EGF-like domain protein] + UDP + H(+). The catalysed reaction is 3-O-(alpha-L-fucosyl)-L-seryl-[EGF-like domain protein] + UDP-N-acetyl-alpha-D-glucosamine = 3-O-(N-acetyl-beta-D-glucosaminyl-(1-&gt;3)-alpha-L-fucosyl)-L-seryl-[EGF-like domain protein] + UDP + H(+). Glycosyltransferase that initiates the elongation of O-linked fucose residues attached to EGF-like repeats in the extracellular domain of Notch molecules. Modulates NOTCH1 activity by modifying O-fucose residues at specific EGF-like domains resulting in enhancement of NOTCH1 activation by DLL1 and JAG1. May be involved in limb formation and in neurogenesis. The polypeptide is Beta-1,3-N-acetylglucosaminyltransferase radical fringe (Mus musculus (Mouse)).